Here is a 1267-residue protein sequence, read N- to C-terminus: RNA-directed RNA polymerase lambda-3 (1267 aa).

Residues 555 to 792 (LSPTSGSAVI…KLYFIFGCRI (238 aa)) form the RdRp catalytic domain.

Belongs to the reoviridae RNA-directed RNA polymerase family.

The protein resides in the virion. The enzyme catalyses RNA(n) + a ribonucleoside 5'-triphosphate = RNA(n+1) + diphosphate. In terms of biological role, RNA-directed RNA polymerase that is involved in transcription and genome replication. Following infection, it catalyzes the synthesis of fully conservative plus strands. After core assembly, which consists in recruitment of one capped plus-strand for each genomic segments and polymerase complexes, the polymerase switches mode and catalyzes the synthesis of complementary minus-strands. This Reovirus type 3 (strain Dearing) (T3D) protein is RNA-directed RNA polymerase lambda-3 (L1).